A 185-amino-acid chain; its full sequence is uncharacterized protein (185 aa).

This is an uncharacterized protein from Archaeoglobus fulgidus (strain ATCC 49558 / DSM 4304 / JCM 9628 / NBRC 100126 / VC-16).